Consider the following 700-residue polypeptide: Elongation factor G 1 (700 aa).

A tr-type G domain is found at 8 to 290 (ERYRNIGISA…AVIDYLPSPA (283 aa)). Residues 17–24 (AHIDAGKT), 88–92 (DTPGH), and 142–145 (NKMD) each bind GTP.

The protein belongs to the TRAFAC class translation factor GTPase superfamily. Classic translation factor GTPase family. EF-G/EF-2 subfamily.

It is found in the cytoplasm. Catalyzes the GTP-dependent ribosomal translocation step during translation elongation. During this step, the ribosome changes from the pre-translocational (PRE) to the post-translocational (POST) state as the newly formed A-site-bound peptidyl-tRNA and P-site-bound deacylated tRNA move to the P and E sites, respectively. Catalyzes the coordinated movement of the two tRNA molecules, the mRNA and conformational changes in the ribosome. The polypeptide is Elongation factor G 1 (Bordetella bronchiseptica (strain ATCC BAA-588 / NCTC 13252 / RB50) (Alcaligenes bronchisepticus)).